The following is a 150-amino-acid chain: Large ribosomal subunit protein uL13 (150 aa).

The disordered stretch occupies residues 130–150 (EHPHGAQQPQPYQLNPSASIK). Polar residues predominate over residues 136-150 (QQPQPYQLNPSASIK).

The protein belongs to the universal ribosomal protein uL13 family. Part of the 50S ribosomal subunit.

Its function is as follows. This protein is one of the early assembly proteins of the 50S ribosomal subunit, although it is not seen to bind rRNA by itself. It is important during the early stages of 50S assembly. This is Large ribosomal subunit protein uL13 from Synechococcus sp. (strain RCC307).